A 130-amino-acid chain; its full sequence is Ribosome-binding factor A (130 aa).

A disordered region spans residues 111 to 130 (RDLDDVGPGATSSDEDAEQR).

This sequence belongs to the RbfA family. As to quaternary structure, monomer. Binds 30S ribosomal subunits, but not 50S ribosomal subunits or 70S ribosomes.

The protein localises to the cytoplasm. In terms of biological role, one of several proteins that assist in the late maturation steps of the functional core of the 30S ribosomal subunit. Associates with free 30S ribosomal subunits (but not with 30S subunits that are part of 70S ribosomes or polysomes). Required for efficient processing of 16S rRNA. May interact with the 5'-terminal helix region of 16S rRNA. The chain is Ribosome-binding factor A from Xanthomonas oryzae pv. oryzae (strain MAFF 311018).